We begin with the raw amino-acid sequence, 129 residues long: Small ribosomal subunit protein uS8 (129 aa).

Belongs to the universal ribosomal protein uS8 family. In terms of assembly, part of the 30S ribosomal subunit. Contacts proteins S5 and S12.

Functionally, one of the primary rRNA binding proteins, it binds directly to 16S rRNA central domain where it helps coordinate assembly of the platform of the 30S subunit. This is Small ribosomal subunit protein uS8 from Mycoplasma mycoides subsp. mycoides SC (strain CCUG 32753 / NCTC 10114 / PG1).